The sequence spans 22 residues: Unknown endosperm protein L (22 aa).

Over residues 1 to 11 (MRHSNKIRDEE) the composition is skewed to basic and acidic residues. The segment at 1–22 (MRHSNKIRDEEMVNNTRLNXXA) is disordered. Positions 13 to 22 (VNNTRLNXXA) are enriched in polar residues.

Post-translationally, the N-terminus is blocked.

The polypeptide is Unknown endosperm protein L (Hordeum vulgare (Barley)).